The following is a 124-amino-acid chain: Small ribosomal subunit protein uS12 (124 aa).

Asp89 carries the 3-methylthioaspartic acid modification.

This sequence belongs to the universal ribosomal protein uS12 family. In terms of assembly, part of the 30S ribosomal subunit. Contacts proteins S8 and S17. May interact with IF1 in the 30S initiation complex.

Functionally, with S4 and S5 plays an important role in translational accuracy. In terms of biological role, interacts with and stabilizes bases of the 16S rRNA that are involved in tRNA selection in the A site and with the mRNA backbone. Located at the interface of the 30S and 50S subunits, it traverses the body of the 30S subunit contacting proteins on the other side and probably holding the rRNA structure together. The combined cluster of proteins S8, S12 and S17 appears to hold together the shoulder and platform of the 30S subunit. This chain is Small ribosomal subunit protein uS12, found in Pectobacterium atrosepticum (strain SCRI 1043 / ATCC BAA-672) (Erwinia carotovora subsp. atroseptica).